Consider the following 362-residue polypeptide: UDP-N-acetylglucosamine--N-acetylmuramyl-(pentapeptide) pyrophosphoryl-undecaprenol N-acetylglucosamine transferase (362 aa).

UDP-N-acetyl-alpha-D-glucosamine-binding positions include 10–12 (TGG), Asn-124, Ser-194, Ile-249, and Gln-294.

It belongs to the glycosyltransferase 28 family. MurG subfamily.

The protein resides in the cell membrane. It carries out the reaction Mur2Ac(oyl-L-Ala-gamma-D-Glu-L-Lys-D-Ala-D-Ala)-di-trans,octa-cis-undecaprenyl diphosphate + UDP-N-acetyl-alpha-D-glucosamine = beta-D-GlcNAc-(1-&gt;4)-Mur2Ac(oyl-L-Ala-gamma-D-Glu-L-Lys-D-Ala-D-Ala)-di-trans,octa-cis-undecaprenyl diphosphate + UDP + H(+). It participates in cell wall biogenesis; peptidoglycan biosynthesis. Cell wall formation. Catalyzes the transfer of a GlcNAc subunit on undecaprenyl-pyrophosphoryl-MurNAc-pentapeptide (lipid intermediate I) to form undecaprenyl-pyrophosphoryl-MurNAc-(pentapeptide)GlcNAc (lipid intermediate II). The sequence is that of UDP-N-acetylglucosamine--N-acetylmuramyl-(pentapeptide) pyrophosphoryl-undecaprenol N-acetylglucosamine transferase from Pediococcus pentosaceus (strain ATCC 25745 / CCUG 21536 / LMG 10740 / 183-1w).